The following is a 219-amino-acid chain: Small ribosomal subunit protein uS3 (219 aa).

The KH type-2 domain maps to 38-106 (IREYITARLK…RVHINILEVK (69 aa)).

This sequence belongs to the universal ribosomal protein uS3 family. Part of the 30S ribosomal subunit. Forms a tight complex with proteins S10 and S14.

Functionally, binds the lower part of the 30S subunit head. Binds mRNA in the 70S ribosome, positioning it for translation. The chain is Small ribosomal subunit protein uS3 from Bacillus cytotoxicus (strain DSM 22905 / CIP 110041 / 391-98 / NVH 391-98).